Reading from the N-terminus, the 1043-residue chain is Integrator complex subunit 3 (1043 aa).

Met-1 is modified (N-acetylmethionine). 3 positions are modified to phosphoserine: Ser-502, Ser-537, and Ser-995. Residues 977 to 1043 (YEDSSTKPPK…GSSAVGSDSD (67 aa)) form a disordered region. Over residues 1008 to 1022 (AEEESGSSSASEEED) the composition is skewed to acidic residues.

The protein belongs to the Integrator subunit 3 family. Component of the Integrator complex, composed of core subunits INTS1, INTS2, INTS3, INTS4, INTS5, INTS6, INTS7, INTS8, INTS9/RC74, INTS10, INTS11/CPSF3L, INTS12, INTS13, INTS14 and INTS15. The core complex associates with protein phosphatase 2A subunits PPP2CA and PPP2R1A, to form the Integrator-PP2A (INTAC) complex. Component of the SOSS complex, composed of SOSS-B (SOSS-B1/NABP2 or SOSS-B2/NABP1), SOSS-A/INTS3 and SOSS-C/INIP. SOSS complexes containing SOSS-B1/NABP2 are more abundant than complexes containing SOSS-B2/NABP1. Interacts with SOSS-B1/NABP2, SOSS-B2/NABP1 and SOSS-C/INIP; the interaction is direct. Interacts with NBN/NBS1.

Its subcellular location is the nucleus. The protein localises to the cytoplasm. Its function is as follows. Component of the integrator complex, a multiprotein complex that terminates RNA polymerase II (Pol II) transcription in the promoter-proximal region of genes. The integrator complex provides a quality checkpoint during transcription elongation by driving premature transcription termination of transcripts that are unfavorably configured for transcriptional elongation: the complex terminates transcription by (1) catalyzing dephosphorylation of the C-terminal domain (CTD) of Pol II subunit POLR2A/RPB1 and SUPT5H/SPT5, (2) degrading the exiting nascent RNA transcript via endonuclease activity and (3) promoting the release of Pol II from bound DNA. The integrator complex is also involved in terminating the synthesis of non-coding Pol II transcripts, such as enhancer RNAs (eRNAs), small nuclear RNAs (snRNAs), telomerase RNAs and long non-coding RNAs (lncRNAs). Within the integrator complex, INTS3 is involved in the post-termination step: INTS3 binds INTS7 in the open conformation of integrator complex and prevents the rebinding of Pol II to the integrator after termination cycle. Mediates recruitment of cytoplasmic dynein to the nuclear envelope, probably as component of the integrator complex. Functionally, component of the SOSS complex, a multiprotein complex that functions downstream of the MRN complex to promote DNA repair and G2/M checkpoint. The SOSS complex associates with single-stranded DNA at DNA lesions and influences diverse endpoints in the cellular DNA damage response including cell-cycle checkpoint activation, recombinational repair and maintenance of genomic stability. The SOSS complex is required for efficient homologous recombination-dependent repair of double-strand breaks (DSBs) and ATM-dependent signaling pathways. In the SOSS complex, it is required for the assembly of the complex and for stabilization of the complex at DNA damage sites. In Homo sapiens (Human), this protein is Integrator complex subunit 3.